The chain runs to 180 residues: Probable DNA replication complex GINS protein PSF2 (180 aa).

This sequence belongs to the GINS2/PSF2 family. As to quaternary structure, component of the GINS complex which is a heterotetramer of gins1, gins2, gins3 and gins4.

It localises to the nucleus. Required for correct functioning of the GINS complex, a complex that plays an essential role in the initiation of DNA replication, and progression of DNA replication forks. GINS complex is a core component of CDC45-MCM-GINS (CMG) helicase, the molecular machine that unwinds template DNA during replication, and around which the replisome is built. The polypeptide is Probable DNA replication complex GINS protein PSF2 (psf-2) (Caenorhabditis elegans).